The chain runs to 666 residues: Putative L-type lectin-domain containing receptor kinase V.1 (666 aa).

The signal sequence occupies residues 1 to 18 (MVLLLFLVLFFVPESVVC). Topologically, residues 19 to 289 (QRPNPNGVEF…WIQSPNGILT (271 aa)) are extracellular. The legume-lectin like stretch occupies residues 27 to 257 (EFNTSGNMYT…SHYILGWTFK (231 aa)). N-linked (GlcNAc...) asparagine glycosylation is found at N29, N74, N123, N176, N204, and N259. The chain crosses the membrane as a helical span at residues 290-310 (ISLTVSGVIILIILSLSLWLF). At 311-666 (LKRKKLLEVL…FTESFVSHGR (356 aa)) the chain is on the cytoplasmic side. The region spanning 344 to 625 (FKDTEVLGKG…SVAQLPHNLL (282 aa)) is the Protein kinase domain. ATP is bound by residues 350–358 (LGKGGFGKV) and K373. D469 serves as the catalytic Proton acceptor.

In the C-terminal section; belongs to the protein kinase superfamily. Ser/Thr protein kinase family. It in the N-terminal section; belongs to the leguminous lectin family.

It localises to the cell membrane. The enzyme catalyses L-seryl-[protein] + ATP = O-phospho-L-seryl-[protein] + ADP + H(+). It carries out the reaction L-threonyl-[protein] + ATP = O-phospho-L-threonyl-[protein] + ADP + H(+). This chain is Putative L-type lectin-domain containing receptor kinase V.1 (LECRK51), found in Arabidopsis thaliana (Mouse-ear cress).